The following is a 630-amino-acid chain: SHC-transforming protein 4 (630 aa).

The segment at 1 to 185 is CH2; the sequence is MRERGQDSLA…RQDRHFLQHL (185 aa). Disordered stretches follow at residues 39–80 and 118–150; these read TSLD…QESP and KLQE…QQDL. Residues 125–142 show a composition bias toward low complexity; that stretch reads PGSSGPSSPETSLSRSGT. Positions 186 to 369 constitute a PID domain; it reads LGMGMNYCVR…VHIDSHAEER (184 aa). A CH1 region spans residues 370–525; that stretch reads EDHEYYNEIP…HIKQQLWSEE (156 aa). Y424 is modified (phosphotyrosine). 2 stretches are compositionally biased toward polar residues: residues 471–486 and 502–513; these read LQST…SAQP and PGATAQPASSHS. Residues 471 to 514 are disordered; it reads LQSTPGSAGNQRSAQPLGSPWHCGKAPETVQPGATAQPASSHSL. The SH2 domain occupies 526-617; the sequence is CYHGKLSRKA…GSEVSLKQPV (92 aa).

As to quaternary structure, interacts (via PID domain) with phosphorylated MUSK (via NPXY motif); undergoes tyrosine phosphorylation downstream of activated MUSK. Interacts with GRB2; the interaction is dependent of Tyr-424 phosphorylation and increased by EGF. In terms of processing, phosphorylated; the phosphorylation is enhanced by EGF. Phosphorylation at Tyr-424 is required for the interaction with GRB2. As to expression, only expressed in melanomas. Weakly expressed in normal melanocytes and benign nevi. Highly expressed at the transition from radial growth phase to vertical growth phase and metastatic melanomas, when tumor cells acquire migratory competence and invasive potential.

It localises to the postsynaptic cell membrane. Activates both Ras-dependent and Ras-independent migratory pathways in melanomas. Contributes to the early phases of agrin-induced tyrosine phosphorylation of CHRNB1. This is SHC-transforming protein 4 (SHC4) from Homo sapiens (Human).